The primary structure comprises 273 residues: Putative pyruvate, phosphate dikinase regulatory protein (273 aa).

153–160 (GISRTSKT) contacts ADP.

It belongs to the pyruvate, phosphate/water dikinase regulatory protein family. PDRP subfamily.

It carries out the reaction N(tele)-phospho-L-histidyl/L-threonyl-[pyruvate, phosphate dikinase] + ADP = N(tele)-phospho-L-histidyl/O-phospho-L-threonyl-[pyruvate, phosphate dikinase] + AMP + H(+). The catalysed reaction is N(tele)-phospho-L-histidyl/O-phospho-L-threonyl-[pyruvate, phosphate dikinase] + phosphate + H(+) = N(tele)-phospho-L-histidyl/L-threonyl-[pyruvate, phosphate dikinase] + diphosphate. Bifunctional serine/threonine kinase and phosphorylase involved in the regulation of the pyruvate, phosphate dikinase (PPDK) by catalyzing its phosphorylation/dephosphorylation. The protein is Putative pyruvate, phosphate dikinase regulatory protein of Rhizobium johnstonii (strain DSM 114642 / LMG 32736 / 3841) (Rhizobium leguminosarum bv. viciae).